Here is a 380-residue protein sequence, read N- to C-terminus: Cytochrome b (380 aa).

The next 4 helical transmembrane spans lie at 34 to 54 (FGSL…LLAA), 78 to 99 (WLIR…YLHI), 114 to 134 (WNIG…GYVL), and 179 to 199 (FFAL…VHLT). Heme b-binding residues include His-84 and His-98. Residues His-183 and His-197 each contribute to the heme b site. His-202 provides a ligand contact to a ubiquinone. 4 helical membrane-spanning segments follow: residues 227-247 (IKDI…ALFS), 289-309 (LGGV…PLLH), 321-341 (LSQI…WVGS), and 348-368 (FIII…VLFP).

It belongs to the cytochrome b family. In terms of assembly, the cytochrome bc1 complex contains 11 subunits: 3 respiratory subunits (MT-CYB, CYC1 and UQCRFS1), 2 core proteins (UQCRC1 and UQCRC2) and 6 low-molecular weight proteins (UQCRH/QCR6, UQCRB/QCR7, UQCRQ/QCR8, UQCR10/QCR9, UQCR11/QCR10 and a cleavage product of UQCRFS1). This cytochrome bc1 complex then forms a dimer. It depends on heme b as a cofactor.

Its subcellular location is the mitochondrion inner membrane. Functionally, component of the ubiquinol-cytochrome c reductase complex (complex III or cytochrome b-c1 complex) that is part of the mitochondrial respiratory chain. The b-c1 complex mediates electron transfer from ubiquinol to cytochrome c. Contributes to the generation of a proton gradient across the mitochondrial membrane that is then used for ATP synthesis. The chain is Cytochrome b (MT-CYB) from Paradisaea rubra (Red bird of paradise).